The chain runs to 210 residues: dTTP/UTP pyrophosphatase (210 aa).

The span at 1–15 (MTHGDNRDGPGRETR) shows a compositional bias: basic and acidic residues. The interval 1–22 (MTHGDNRDGPGRETRSSGPLVL) is disordered. D86 functions as the Proton acceptor in the catalytic mechanism.

This sequence belongs to the Maf family. YhdE subfamily. It depends on a divalent metal cation as a cofactor.

It localises to the cytoplasm. The enzyme catalyses dTTP + H2O = dTMP + diphosphate + H(+). It catalyses the reaction UTP + H2O = UMP + diphosphate + H(+). Functionally, nucleoside triphosphate pyrophosphatase that hydrolyzes dTTP and UTP. May have a dual role in cell division arrest and in preventing the incorporation of modified nucleotides into cellular nucleic acids. The chain is dTTP/UTP pyrophosphatase from Rhodospirillum rubrum (strain ATCC 11170 / ATH 1.1.1 / DSM 467 / LMG 4362 / NCIMB 8255 / S1).